The sequence spans 1163 residues: Hamartin (1163 aa).

Lys30 participates in a covalent cross-link: Glycyl lysine isopeptide (Lys-Gly) (interchain with G-Cter in ubiquitin). Residues 295 to 316 (SSYVDTQNSYGGATSTPSSTSR) are compositionally biased toward polar residues. Disordered stretches follow at residues 295-337 (SSYV…STRP) and 353-594 (CGMT…QRGV). The span at 321 to 337 (STPGQLPQSLSSLSTRP) shows a compositional bias: low complexity. A compositionally biased stretch (pro residues) spans 393–402 (TSPPPAPPCP). The tract at residues 403-787 (QDDCAHGPAS…QIRQLQHDRE (385 aa)) is mediates interaction with WDR45B. Residues 474 to 487 (EKDKEEAAISKELS) show a composition bias toward basic and acidic residues. Phosphoserine occurs at positions 487, 505, 511, 521, 595, and 598. The segment covering 512–530 (LSGSQRKTHSAASGTQGFS) has biased composition (polar residues). Coiled-coil stretches lie at residues 721 to 919 (RKVI…LAKK) and 970 to 994 (EKDG…ERLD). The span at 1008–1020 (NEEAAGHNGETRT) shows a compositional bias: basic and acidic residues. Residues 1008 to 1163 (NEEAAGHNGE…DYNETHHEHS (156 aa)) form a disordered region. A compositionally biased stretch (low complexity) spans 1029 to 1046 (SCGGRVTGGSSSSSSELS). A compositionally biased stretch (polar residues) spans 1066–1083 (EPSSSIPTTVGSLPSSKS). The segment covering 1088-1099 (KTRELFRNKSES) has biased composition (basic and acidic residues). Phosphoserine is present on Ser1097. The segment covering 1131–1146 (PPSLDAPHPSSPSSDS) has biased composition (low complexity). Basic and acidic residues predominate over residues 1154 to 1163 (DYNETHHEHS).

In terms of assembly, component of the TSC-TBC complex (also named Rhebulator complex), composed of 2 molecules of TSC1, 2 molecules of TSC2 and 1 molecule of TBC1D7. Probably forms a complex composed of chaperones HSP90 and HSP70, co-chaperones STIP1/HOP, CDC37, PPP5C, PTGES3/p23, TSC1 and client protein TSC2. Forms a complex composed of chaperones HSP90 and HSP70, co-chaperones CDC37, PPP5C, TSC1 and client protein TSC2, CDK4, AKT, RAF1 and NR3C1; this complex does not contain co-chaperones STIP1/HOP and PTGES3/p23. Forms a complex containing HSP90AA1, TSC1 and TSC2; TSC1 is required to recruit TCS2 to the complex. Interacts (via C-terminus) with the closed form of HSP90AA1 (via the middle domain and TPR repeat-binding motif). Interacts with DOCK7. Interacts with FBXW5. Interacts with WDR45B. Interacts with RPAP3 and URI1. Phosphorylation at Ser-505 does not affect interaction with TSC2. Post-translationally, 'Lys-63'-linked ubiquitinated at Lys-30 by PELI1; the ubiquitination promotes TSC1/TSC2 complex stability. Highly expressed in brain, spleen and kidney, followed by liver and heart.

It is found in the lysosome membrane. Its subcellular location is the cytoplasm. The protein resides in the cytosol. Non-catalytic component of the TSC-TBC complex, a multiprotein complex that acts as a negative regulator of the canonical mTORC1 complex, an evolutionarily conserved central nutrient sensor that stimulates anabolic reactions and macromolecule biosynthesis to promote cellular biomass generation and growth. The TSC-TBC complex acts as a GTPase-activating protein (GAP) for the small GTPase RHEB, a direct activator of the protein kinase activity of mTORC1. In absence of nutrients, the TSC-TBC complex inhibits mTORC1, thereby preventing phosphorylation of ribosomal protein S6 kinase (RPS6KB1 and RPS6KB2) and EIF4EBP1 (4E-BP1) by the mTORC1 signaling. The TSC-TBC complex is inactivated in response to nutrients, relieving inhibition of mTORC1. Within the TSC-TBC complex, TSC1 stabilizes TSC2 and prevents TSC2 self-aggregation. Involved in microtubule-mediated protein transport via its ability to regulate mTORC1 signaling. Also acts as a co-chaperone for HSP90AA1 facilitating HSP90AA1 chaperoning of protein clients such as kinases, TSC2 and glucocorticoid receptor NR3C1. Increases ATP binding to HSP90AA1 and inhibits HSP90AA1 ATPase activity. Competes with the activating co-chaperone AHSA1 for binding to HSP90AA1, thereby providing a reciprocal regulatory mechanism for chaperoning of client proteins. Recruits TSC2 to HSP90AA1 and stabilizes TSC2 by preventing the interaction between TSC2 and ubiquitin ligase HERC1. In Rattus norvegicus (Rat), this protein is Hamartin.